Reading from the N-terminus, the 1404-residue chain is DNA-directed RNA polymerase subunit beta' (1404 aa).

4 residues coordinate Zn(2+): Cys-70, Cys-72, Cys-85, and Cys-88. Residues Asp-458, Asp-460, and Asp-462 each contribute to the Mg(2+) site. Zn(2+) contacts are provided by Cys-813, Cys-887, Cys-894, and Cys-897. The segment at 1377 to 1404 (ERRAIAESEAAELEASQAETSDENAAAE) is disordered.

It belongs to the RNA polymerase beta' chain family. In terms of assembly, the RNAP catalytic core consists of 2 alpha, 1 beta, 1 beta' and 1 omega subunit. When a sigma factor is associated with the core the holoenzyme is formed, which can initiate transcription. It depends on Mg(2+) as a cofactor. Zn(2+) is required as a cofactor.

It carries out the reaction RNA(n) + a ribonucleoside 5'-triphosphate = RNA(n+1) + diphosphate. In terms of biological role, DNA-dependent RNA polymerase catalyzes the transcription of DNA into RNA using the four ribonucleoside triphosphates as substrates. In Polaromonas naphthalenivorans (strain CJ2), this protein is DNA-directed RNA polymerase subunit beta'.